The chain runs to 251 residues: Phosphate import ATP-binding protein PstB (251 aa).

The 242-residue stretch at 5 to 246 (FDIRNFSVYY…PEKELTEKYL (242 aa)) folds into the ABC transporter domain. 37–44 (GPSGCGKS) contacts ATP.

Belongs to the ABC transporter superfamily. Phosphate importer (TC 3.A.1.7) family. As to quaternary structure, the complex is composed of two ATP-binding proteins (PstB), two transmembrane proteins (PstC and PstA) and a solute-binding protein (PstS).

Its subcellular location is the cell membrane. It carries out the reaction phosphate(out) + ATP + H2O = ADP + 2 phosphate(in) + H(+). In terms of biological role, part of the ABC transporter complex PstSACB involved in phosphate import. Responsible for energy coupling to the transport system. The protein is Phosphate import ATP-binding protein PstB of Archaeoglobus fulgidus (strain ATCC 49558 / DSM 4304 / JCM 9628 / NBRC 100126 / VC-16).